The chain runs to 316 residues: ATP synthase gamma chain (316 aa).

It belongs to the ATPase gamma chain family. As to quaternary structure, F-type ATPases have 2 components, CF(1) - the catalytic core - and CF(0) - the membrane proton channel. CF(1) has five subunits: alpha(3), beta(3), gamma(1), delta(1), epsilon(1). CF(0) has three main subunits: a, b and c.

It is found in the cellular thylakoid membrane. Functionally, produces ATP from ADP in the presence of a proton gradient across the membrane. The gamma chain is believed to be important in regulating ATPase activity and the flow of protons through the CF(0) complex. The protein is ATP synthase gamma chain of Parasynechococcus marenigrum (strain WH8102).